The following is a 203-amino-acid chain: Proteasome subunit beta 2 (203 aa).

Residues 1–9 constitute a propeptide, removed in mature form; by autocatalysis; it reads MGEEVQIGA. The active-site Nucleophile is Thr10.

Belongs to the peptidase T1B family. As to quaternary structure, the 20S proteasome core is composed of 14 alpha and 14 beta subunits that assemble into four stacked heptameric rings, resulting in a barrel-shaped structure. The two inner rings, each composed of seven catalytic beta subunits, are sandwiched by two outer rings, each composed of seven alpha subunits. The catalytic chamber with the active sites is on the inside of the barrel. Has a gated structure, the ends of the cylinder being occluded by the N-termini of the alpha-subunits. Is capped at one or both ends by the proteasome regulatory ATPase, PAN.

It is found in the cytoplasm. The catalysed reaction is Cleavage of peptide bonds with very broad specificity.. Its activity is regulated as follows. The formation of the proteasomal ATPase PAN-20S proteasome complex, via the docking of the C-termini of PAN into the intersubunit pockets in the alpha-rings, triggers opening of the gate for substrate entry. Interconversion between the open-gate and close-gate conformations leads to a dynamic regulation of the 20S proteasome proteolysis activity. Its function is as follows. Component of the proteasome core, a large protease complex with broad specificity involved in protein degradation. The protein is Proteasome subunit beta 2 of Pyrobaculum aerophilum (strain ATCC 51768 / DSM 7523 / JCM 9630 / CIP 104966 / NBRC 100827 / IM2).